Consider the following 69-residue polypeptide: Light-harvesting protein B-1015 beta chain (69 aa).

Residues 2 to 21 (ADLKPSLTGLTEEEAKEFHG) are Cytoplasmic-facing. Residues His20 and His38 each coordinate a bacteriochlorophyll. The helical transmembrane segment at 22–44 (IFVTSTVLYLATAVIVHYLVWTA) threads the bilayer. At 45–56 (RPWIAPIPKGWV) the chain is on the periplasmic side. A propeptide spanning residues 57–69 (NLEGVQSALSYLV) is cleaved from the precursor.

It belongs to the antenna complex beta subunit family. The core complex is formed by different alpha and beta chains, binding bacteriochlorophyll molecules, and arranged most probably in tetrameric structures disposed around the reaction center. The non-pigmented gamma chains may constitute additional components.

Its subcellular location is the cell inner membrane. Its function is as follows. Antenna complexes are light-harvesting systems, which transfer the excitation energy to the reaction centers. The polypeptide is Light-harvesting protein B-1015 beta chain (pufB) (Blastochloris viridis (Rhodopseudomonas viridis)).